Here is a 578-residue protein sequence, read N- to C-terminus: MAVSWRSWLANEGVKHLCLFIWLSMNVLLFWKTFLLYNQGPEYHYLHQMLGLGLCLSRASASVLNLNCSLILLPMCRTLLAYLRGSQKVPSRRTRRLLDKSRTFHITCGVTICIFSGVHVAAHLVNALNFSVNYSEDFVELNAARYRDEDPRKLLFTTVPGLTGVCMVVVLFLMITASTYAIRVSNYDIFWYTHNLFFVFYMLLTLHVSGGLLKYQTNLDTHPPGCISLNRTSSQNISLPEYFSEHFHEPFPEGFSKPAEFTQHKFVKICMEEPRFQANFPQTWLWISGPLCLYCAERLYRYIRSNKPVTIISVMSHPSDVMEIRMVKENFKARPGQYITLHCPSVSALENHPFTLTMCPTETKATFGVHLKIVGDWTERFRDLLLPPSSQDSEILPFIQSRNYPKLYIDGPFGSPFEESLNYEVSLCVAGGIGVTPFASILNTLLDDWKPYKLRRLYFIWVCRDIQSFRWFADLLCMLHNKFWQENRPDYVNIQLYLSQTDGIQKIIGEKYHALNSRLFIGRPRWKLLFDEIAKYNRGKTVGVFCCGPNSLSKTLHKLSNQNNSYGTRFEYNKESFS.

Residues 1 to 16 (MAVSWRSWLANEGVKH) lie on the Cytoplasmic side of the membrane. Residues 17–37 (LCLFIWLSMNVLLFWKTFLLY) traverse the membrane as a helical segment. At 38–62 (NQGPEYHYLHQMLGLGLCLSRASAS) the chain is on the extracellular side. The Ferric oxidoreductase domain maps to 58–303 (RASASVLNLN…YCAERLYRYI (246 aa)). Residues 63–83 (VLNLNCSLILLPMCRTLLAYL) traverse the membrane as a helical segment. At 84–103 (RGSQKVPSRRTRRLLDKSRT) the chain is on the cytoplasmic side. Residues 104–124 (FHITCGVTICIFSGVHVAAHL) form a helical membrane-spanning segment. Topologically, residues 125-154 (VNALNFSVNYSEDFVELNAARYRDEDPRKL) are extracellular. Asn-133 carries N-linked (GlcNAc...) asparagine glycosylation. Residues 155-175 (LFTTVPGLTGVCMVVVLFLMI) form a helical membrane-spanning segment. At 176-188 (TASTYAIRVSNYD) the chain is on the cytoplasmic side. Residues 189-209 (IFWYTHNLFFVFYMLLTLHVS) traverse the membrane as a helical segment. Residues 210-424 (GGLLKYQTNL…SPFEESLNYE (215 aa)) lie on the Extracellular side of the membrane. Residues 218–273 (NLDTHPPGCISLNRTSSQNISLPEYFSEHFHEPFPEGFSKPAEFTQHKFVKICMEE) form an E-loop; essential for H2O2 generating catalytic activity region. Residue Asn-230 is glycosylated (N-linked (GlcNAc...) asparagine). The segment at 248 to 575 (HEPFPEGFSK…YGTRFEYNKE (328 aa)) is mediates interaction with TLR4. Residues 304-419 (RSNKPVTIIS…DGPFGSPFEE (116 aa)) form the FAD-binding FR-type domain. A helical transmembrane segment spans residues 425–445 (VSLCVAGGIGVTPFASILNTL). The Cytoplasmic portion of the chain corresponds to 446–578 (LDDWKPYKLR…RFEYNKESFS (133 aa)).

Interacts with protein disulfide isomerase. Interacts with, relocalizes and stabilizes CYBA/p22phox. Interacts with TLR4. Interacts with PPP1R15A. Interacts with LRRC8A; this interaction prevents the ubiquitin-mediated degradation of LRRC8A. It depends on heme as a cofactor. Deubiquitinated by USP19. Post-translationally, N-glycosylated and glycosylation is required for its proper function. In terms of processing, N-glycosylated. Expressed by distal tubular cells in kidney cortex and in endothelial cells (at protein level). Widely expressed. Strongly expressed in kidney and to a lower extent in heart, adipocytes, hepatoma, endothelial cells, skeletal muscle, brain, several brain tumor cell lines and airway epithelial cells.

The protein resides in the cytoplasm. It localises to the endoplasmic reticulum membrane. It is found in the cell membrane. The protein localises to the cell junction. Its subcellular location is the focal adhesion. The protein resides in the nucleus. It localises to the nucleolus. It is found in the perinuclear region. The enzyme catalyses NADPH + 2 O2 = 2 superoxide + NADP(+) + H(+). It catalyses the reaction NADPH + O2 + H(+) = H2O2 + NADP(+). Its activity is regulated as follows. Inhibited by plumbagin. Activated by phorbol 12-myristate 13-acetate (PMA). Activated by insulin. Inhibited by diphenylene iodonium. NADPH oxidase that catalyzes predominantly the reduction of oxygen to H2O2. Can also catalyze to a smaller extent, the reduction of oxygen to superoxide. May function as an oxygen sensor regulating the KCNK3/TASK-1 potassium channel and HIF1A activity. May regulate insulin signaling cascade. May play a role in apoptosis, bone resorption and lipolysaccharide-mediated activation of NFKB. May produce superoxide in the nucleus and play a role in regulating gene expression upon cell stimulation. Promotes ferroptosis, reactive oxygen species production and reduced glutathione (GSH) levels by activating NLRP3 inflammasome activation and cytokine release. In terms of biological role, NADPH oxidase that catalyzes the generation of superoxide from molecular oxygen utilizing NADPH as an electron donor. Involved in redox signaling in vascular cells. Modulates the nuclear activation of ERK1/2 and the ELK1 transcription factor, and is capable of inducing nuclear DNA damage. Its function is as follows. Lacks superoxide-generating NADPH oxidase activity. In Homo sapiens (Human), this protein is NADPH oxidase 4 (NOX4).